Here is a 472-residue protein sequence, read N- to C-terminus: Trigger factor (472 aa).

The region spanning 174–261 is the PPIase FKBP-type domain; it reads GDIALVSFKG…LEDLKIKELP (88 aa). Positions 438 to 472 are disordered; sequence EKTPEKARDQIKEKSSKKKTTKTNKEKKSSKTPKS. The span at 439–451 shows a compositional bias: basic and acidic residues; the sequence is KTPEKARDQIKEK.

Belongs to the FKBP-type PPIase family. Tig subfamily.

Its subcellular location is the cytoplasm. The catalysed reaction is [protein]-peptidylproline (omega=180) = [protein]-peptidylproline (omega=0). Its function is as follows. Involved in protein export. Acts as a chaperone by maintaining the newly synthesized protein in an open conformation. Functions as a peptidyl-prolyl cis-trans isomerase. The chain is Trigger factor from Prochlorococcus marinus (strain NATL2A).